The sequence spans 394 residues: Exodeoxyribonuclease 7 large subunit (394 aa).

Belongs to the XseA family. In terms of assembly, heterooligomer composed of large and small subunits.

The protein resides in the cytoplasm. It carries out the reaction Exonucleolytic cleavage in either 5'- to 3'- or 3'- to 5'-direction to yield nucleoside 5'-phosphates.. Bidirectionally degrades single-stranded DNA into large acid-insoluble oligonucleotides, which are then degraded further into small acid-soluble oligonucleotides. This is Exodeoxyribonuclease 7 large subunit from Thermotoga sp. (strain RQ2).